We begin with the raw amino-acid sequence, 895 residues long: Probable inorganic carbon transporter subunit DabA 1 (895 aa).

The Zn(2+) site is built by Cys398, Asp400, His581, and Cys596.

It belongs to the inorganic carbon transporter (TC 9.A.2) DabA family. In terms of assembly, forms a complex with DabB. Zn(2+) serves as cofactor.

Its subcellular location is the cell inner membrane. In terms of biological role, part of an energy-coupled inorganic carbon pump. The polypeptide is Probable inorganic carbon transporter subunit DabA 1 (Rhodopirellula baltica (strain DSM 10527 / NCIMB 13988 / SH1)).